A 430-amino-acid polypeptide reads, in one-letter code: Trigger factor (430 aa).

One can recognise a PPIase FKBP-type domain in the interval 164–249; it reads DDWAVIDHEG…LKALKTRQLP (86 aa).

Belongs to the FKBP-type PPIase family. Tig subfamily.

It localises to the cytoplasm. The enzyme catalyses [protein]-peptidylproline (omega=180) = [protein]-peptidylproline (omega=0). In terms of biological role, involved in protein export. Acts as a chaperone by maintaining the newly synthesized protein in an open conformation. Functions as a peptidyl-prolyl cis-trans isomerase. In Anaeromyxobacter sp. (strain Fw109-5), this protein is Trigger factor.